A 432-amino-acid polypeptide reads, in one-letter code: Ciliated left-right organizer protein containing ZP-N domains homolog (432 aa).

As to expression, expressed specifically by cells of the ciliated left-right organizer.

In Danio rerio (Zebrafish), this protein is Ciliated left-right organizer protein containing ZP-N domains homolog (ciroz).